We begin with the raw amino-acid sequence, 1075 residues long: DNA-directed RNA polymerase subunit beta (1075 aa).

It belongs to the RNA polymerase beta chain family. In terms of assembly, in plastids the minimal PEP RNA polymerase catalytic core is composed of four subunits: alpha, beta, beta', and beta''. When a (nuclear-encoded) sigma factor is associated with the core the holoenzyme is formed, which can initiate transcription.

It localises to the plastid. The protein resides in the chloroplast. It catalyses the reaction RNA(n) + a ribonucleoside 5'-triphosphate = RNA(n+1) + diphosphate. In terms of biological role, DNA-dependent RNA polymerase catalyzes the transcription of DNA into RNA using the four ribonucleoside triphosphates as substrates. This is DNA-directed RNA polymerase subunit beta from Sorghum bicolor (Sorghum).